Consider the following 644-residue polypeptide: MSLIECKNINRCFGSGENRVHILKDISLSIEKGDFVAIIGQSGSGKSTLMNILGCLDTAGSGSYRIDGIETAKMQPDELAALRRERFGFIFQRYNLLSSLTARDNVALPAVYMGMGGKERSARADKLLQDLGLASKEGNKPGELSGGQQQRVSIARALMNGGEIIFADEPTGALDTASGKNVMEIIRRLHEAGHTVIMVTHDPGIAANANRVIEIRDGEIISDTSKNPEIPASNVGRIREKASWSFYYDQFVEAFRMSVQAVLAHKMRSLLTMLGIIIGIASVVSVVALGNGSQKKILEDISSMGTNTISIFPGRGFGDRRSGKIKTLTIDDAKIIAKQSYVASATPMTSSGGTLTYRNTDLTASLYGVGEQYFDVRGLKLETGRLFDENDVKEDAQVVVIDQNVKDKLFADSDPLGKTILFRKRPLTVIGVMKKDENAFGNSDVLMLWSPYTTVMHQITGESHTNSITVKIKDNANTRVAEKGLAELLKARHGTEDFFMNNSDSIRQMVESTTGTMKLLISSIALISLVVGGIGVMNIMLVSVTERTKEIGIRMAIGARRGNILQQFLIEAVLICIIGGLVGVGLSAAVSLVFNHFVTDFPMDISAASVIGAVACSTGIGIAFGFMPANKAAKLNPIDALAQD.

In terms of domain architecture, ABC transporter spans 4–242; it reads IECKNINRCF…SNVGRIREKA (239 aa). 40 to 47 lines the ATP pocket; it reads GQSGSGKS. The next 4 membrane-spanning stretches (helical) occupy residues 270–290, 524–544, 574–594, and 607–627; these read LLTM…VALG, IALI…LVSV, LICI…SLVF, and AASV…FGFM.

The protein belongs to the ABC transporter superfamily. Macrolide exporter (TC 3.A.1.122) family. In terms of assembly, homodimer.

The protein resides in the cell inner membrane. Non-canonical ABC transporter that contains transmembrane domains (TMD), which form a pore in the inner membrane, and an ATP-binding domain (NBD), which is responsible for energy generation. Confers resistance against macrolides. The protein is Macrolide export ATP-binding/permease protein MacB of Neisseria gonorrhoeae (strain ATCC 700825 / FA 1090).